Reading from the N-terminus, the 891-residue chain is Receptor-like protein 50 (891 aa).

The signal sequence occupies residues 1–22 (MITIIWSLCLIFCLSNSILVIA). The Extracellular portion of the chain corresponds to 23–849 (KDLCLPDQRD…KEEKDKGLSW (827 aa)). Residues Asn-62 and Asn-98 are each glycosylated (N-linked (GlcNAc...) asparagine). 7 LRR repeats span residues 105–130 (QHLQ…NFKY), 132–152 (RVLN…LRSL), 153–176 (SYLT…SMGN), 177–201 (LKHL…LGNL), 203–225 (YLTD…MGNL), 226–249 (KSLR…LGSL), and 250–272 (SNLT…SMSS). A glycan (N-linked (GlcNAc...) asparagine) is linked at Asn-200. Asn-251, Asn-285, and Asn-306 each carry an N-linked (GlcNAc...) asparagine glycan. LRR repeat units lie at residues 286–309 (LSSL…NMSS), 310–334 (LSKL…LFML), 336–358 (SLIK…NISS), and 359–383 (PSNL…ILKL). Asn-355 carries an N-linked (GlcNAc...) asparagine glycan. Residues 384 to 407 (VGLSALSLSFWDTGGIVDFSIFLQ) form an LRR 12; degenerate repeat. 15 LRR repeats span residues 408 to 436 (LKSL…MMHL), 438 to 453 (LSSC…LENQ), 454 to 477 (TSLY…LWRL), 478 to 504 (PTLR…IYSF), 506 to 519 (ASDN…PRAV), 520 to 544 (CEIG…EISN), 545 to 568 (KTLS…SLHG), 570 to 591 (LRSL…LINC), 593 to 614 (YLQF…WLKS), 615 to 641 (LPNL…SLSF), 642 to 665 (SKLR…YFVG), 712 to 736 (FEIY…IGIL), 737 to 760 (KELI…LSNL), 761 to 784 (SNLQ…LGEL), and 786 to 809 (FLAR…QIQS). 3 N-linked (GlcNAc...) asparagine glycosylation sites follow: Asn-422, Asn-442, and Asn-452. N-linked (GlcNAc...) asparagine glycosylation is found at Asn-531, Asn-544, Asn-554, Asn-590, and Asn-605. Residues Asn-743 and Asn-759 are each glycosylated (N-linked (GlcNAc...) asparagine). Residues Asn-791 and Asn-811 are each glycosylated (N-linked (GlcNAc...) asparagine). A helical transmembrane segment spans residues 850–870 (VAAAIGYVPGLFCGLAIGHIL). Residues 871 to 891 (TSYKRDWFMRIFSCFSSPLKK) are Cytoplasmic-facing.

It belongs to the RLP family.

The protein resides in the cell membrane. This chain is Receptor-like protein 50, found in Arabidopsis thaliana (Mouse-ear cress).